The chain runs to 153 residues: Putative pre-16S rRNA nuclease (153 aa).

It belongs to the YqgF nuclease family.

Its subcellular location is the cytoplasm. In terms of biological role, could be a nuclease involved in processing of the 5'-end of pre-16S rRNA. The sequence is that of Putative pre-16S rRNA nuclease from Prochlorococcus marinus (strain SARG / CCMP1375 / SS120).